We begin with the raw amino-acid sequence, 235 residues long: Ion-translocating oxidoreductase complex subunit E (235 aa).

Transmembrane regions (helical) follow at residues Leu63 to Phe83, Ile93 to Ala113, Thr117 to Gly137, Ile152 to Leu172, and Ser206 to Ile226.

This sequence belongs to the NqrDE/RnfAE family. The complex is composed of six subunits: RnfA, RnfB, RnfC, RnfD, RnfE and RnfG.

It is found in the cell inner membrane. Part of a membrane-bound complex that couples electron transfer with translocation of ions across the membrane. The sequence is that of Ion-translocating oxidoreductase complex subunit E from Haemophilus influenzae (strain PittEE).